A 361-amino-acid chain; its full sequence is tRNA-specific 2-thiouridylase MnmA (361 aa).

Residues 8 to 15 (AMSGGVDS) and M35 each bind ATP. Residues 95–97 (NPD) form an interaction with target base in tRNA region. Catalysis depends on C100, which acts as the Nucleophile. Cysteines 100 and 196 form a disulfide. G124 contributes to the ATP binding site. The interaction with tRNA stretch occupies residues 146–148 (KDQ). C196 acts as the Cysteine persulfide intermediate in catalysis. An interaction with tRNA region spans residues 303–304 (RY).

It belongs to the MnmA/TRMU family.

Its subcellular location is the cytoplasm. The catalysed reaction is S-sulfanyl-L-cysteinyl-[protein] + uridine(34) in tRNA + AH2 + ATP = 2-thiouridine(34) in tRNA + L-cysteinyl-[protein] + A + AMP + diphosphate + H(+). Its function is as follows. Catalyzes the 2-thiolation of uridine at the wobble position (U34) of tRNA, leading to the formation of s(2)U34. In Chlamydia felis (strain Fe/C-56) (Chlamydophila felis), this protein is tRNA-specific 2-thiouridylase MnmA.